The sequence spans 395 residues: Acetyl-CoA acetyltransferase (395 aa).

Cys90 functions as the Acyl-thioester intermediate in the catalytic mechanism. 2 residues coordinate CoA: Tyr185 and Lys230. A K(+)-binding site is contributed by Tyr185. K(+) contacts are provided by Ala246, Ala247, and Ala249. Residue Ser250 coordinates CoA. Residue Val347 coordinates K(+). Active-site proton acceptor residues include His351 and Cys381.

It belongs to the thiolase-like superfamily. Thiolase family. Homotetramer.

The protein localises to the cytoplasm. The enzyme catalyses 2 acetyl-CoA = acetoacetyl-CoA + CoA. The protein operates within metabolic intermediate biosynthesis; (R)-mevalonate biosynthesis; (R)-mevalonate from acetyl-CoA: step 1/3. In terms of biological role, acetyl-CoA acetyltransferase; part of the first module of ergosterol biosynthesis pathway that includes the early steps of the pathway, conserved across all eukaryotes, and which results in the formation of mevalonate from acetyl-coenzyme A (acetyl-CoA). Erg10 catalyzes the formation of acetoacetyl-CoA from acetyl-CoA. The first module starts with the action of the cytosolic acetyl-CoA acetyltransferase eg10 that catalyzes the formation of acetoacetyl-CoA. The hydroxymethylglutaryl-CoA synthases erg13 then condenses acetyl-CoA with acetoacetyl-CoA to form HMG-CoA. The rate-limiting step of the early module is the reduction to mevalonate by the 3-hydroxy-3-methylglutaryl-coenzyme A (HMG-CoA) reductases hcs1. This is Acetyl-CoA acetyltransferase (erg10) from Schizosaccharomyces pombe (strain 972 / ATCC 24843) (Fission yeast).